A 180-amino-acid polypeptide reads, in one-letter code: Small ribosomal subunit protein uS5 (180 aa).

The S5 DRBM domain occupies 24 to 87 (MIEKLVAVNR…EQARKNLATV (64 aa)).

This sequence belongs to the universal ribosomal protein uS5 family. As to quaternary structure, part of the 30S ribosomal subunit. Contacts proteins S4 and S8.

Its function is as follows. With S4 and S12 plays an important role in translational accuracy. Functionally, located at the back of the 30S subunit body where it stabilizes the conformation of the head with respect to the body. The sequence is that of Small ribosomal subunit protein uS5 from Xanthomonas axonopodis pv. citri (strain 306).